A 59-amino-acid polypeptide reads, in one-letter code: Cecropin-A (59 aa).

Positions 1–23 (MNFNKLFVIVLLAALAFFGQAEA) are cleaved as a signal peptide. Leu-57 carries the leucine amide modification.

The protein belongs to the cecropin family.

It is found in the secreted. Functionally, cecropins have lytic and antibacterial activity against several Gram-positive and Gram-negative bacteria. The sequence is that of Cecropin-A (CECA) from Culex pipiens pipiens (Northern house mosquito).